Reading from the N-terminus, the 306-residue chain is Glutathione transport system permease protein GsiC (306 aa).

Over 1-8 the chain is Cytoplasmic; the sequence is MLNYVIKR. A helical membrane pass occupies residues 9-29; the sequence is LLGLIPTLFIVSVLVFLFVHM. At 30 to 102 the chain is on the periplasmic side; it reads LPGDPARLIA…SRFMPTLWLT (73 aa). One can recognise an ABC transmembrane type-1 domain in the interval 95–292; that stretch reads FMPTLWLTIT…LEFILINLVV (198 aa). The helical transmembrane segment at 103 to 123 threads the bilayer; it reads ITSMVWAVIFGMAAGIIAAVW. The Cytoplasmic portion of the chain corresponds to 124–134; the sequence is RNRWPDRLSMT. Residues 135–155 form a helical membrane-spanning segment; the sequence is IAVSGISFPAFALGMLLIQVF. Residues 156-168 lie on the Periplasmic side of the membrane; that stretch reads SVELGWLPTVGAD. Residues 169–189 traverse the membrane as a helical segment; that stretch reads SWQHYILPSLTLGAAVAAVMA. Residues 190 to 228 lie on the Cytoplasmic side of the membrane; that stretch reads RFTRASFVDVLSEDYMRTARAKGVSETWVVLKHGLRNAM. Residues 229 to 249 form a helical membrane-spanning segment; that stretch reads IPVVTMMGLQFGFLLGGSIVV. Over 250-277 the chain is Periplasmic; that stretch reads EKVFNWPGLGRLLVDSVEMRDYPVIQAE. Residues 278 to 298 traverse the membrane as a helical segment; sequence ILLFSLEFILINLVVDVLYAA. The Cytoplasmic portion of the chain corresponds to 299-306; the sequence is INPAIRYK.

This sequence belongs to the binding-protein-dependent transport system permease family. In terms of assembly, the complex is composed of two ATP-binding proteins (GsiA), two transmembrane proteins (GsiC and GsiD) and a solute-binding protein (GsiB).

It localises to the cell inner membrane. Its function is as follows. Part of the ABC transporter complex GsiABCD involved in glutathione import. Probably responsible for the translocation of the substrate across the membrane. The protein is Glutathione transport system permease protein GsiC of Escherichia coli O6:H1 (strain CFT073 / ATCC 700928 / UPEC).